We begin with the raw amino-acid sequence, 351 residues long: MNTLFLHCRPGFEGEVCAEITDLAARLDVPGYSKAKPGSACAEFVCSEAADGERMMRSVRFNSLIFPRQWARGGFVMLPESDRISVLLDALADYPVCGSLWLEVVDTNDGKELSTFCKKFEAPLRKALLKAGKLVDDARKPRLLLTFKSGREVFAGIAEADNQAMWPMGIPRLKFPREAPSRSTLKLEEAWHHFIPREQWDQRLAPGMTAVDLGAAPGGWTWQLVNREIRVTAVDNGPMAESLMYSGFVVHQRADGFTFRPRHPVHWMVCDIVEKPARTAAMIETWLGEGLCREAVVNLKLPMKQRYAEVRRLLDRIESGLAERGLKVSIGCKQLYHDREEVTCHLRRHGK.

S-adenosyl-L-methionine-binding positions include serine 183, 216 to 219, aspartate 235, aspartate 255, and aspartate 271; that span reads APGG. The Proton acceptor role is filled by lysine 300.

This sequence belongs to the class I-like SAM-binding methyltransferase superfamily. RNA methyltransferase RlmE family. RlmM subfamily. Monomer.

The protein resides in the cytoplasm. The catalysed reaction is cytidine(2498) in 23S rRNA + S-adenosyl-L-methionine = 2'-O-methylcytidine(2498) in 23S rRNA + S-adenosyl-L-homocysteine + H(+). Its function is as follows. Catalyzes the 2'-O-methylation at nucleotide C2498 in 23S rRNA. This chain is Ribosomal RNA large subunit methyltransferase M, found in Ectopseudomonas mendocina (strain ymp) (Pseudomonas mendocina).